We begin with the raw amino-acid sequence, 2563 residues long: MYNHQGKNNKMSDIAIVGYSFKLPQGVEDDDAFWDVLENRRNLMTDWPESRVKTDSFANNKHQKWNGKGGHFINDDVAAFDAPFFSLTAKEASAMDPMQRWTLEATYHAFENAGLPVDSLKGSRTAVFSASMLEDYSRMTAVDPDNLERTAVTGSTVSCIIPNRVSWYFDLRGPSIHVNTACSSSLSAVDMACKALNSGDALCAVVTGTNLLLDPSIFQVLANQGFLSPDGVCYSFDERANGYARGEGVIAVVLKPVQAAIENGDMIRAVIRSIGSNQDGHTPILTQPSSQSQEELIRHVYKQAGLSMSDTRYVEAHGTGTPVGDPIEVKAIGRCFQEHRSHSEPLYVGSVKANIGHLEGASALASLVKCICNMTRRSTQGGPKLTLTVILEKGVILPNALLQKMNPAMNADTYSIEVPIQNVQWPVQGLRRVSLNSFGFGGSNSHIVLDDALHYLQDRSLSGIHNTSLIPKPITNGSGVTNGHGAAHTNGANVTKGVANGHSDVELRKLLVWTAADEKAAKRTMEAYDNFHKEKMLGDPKKLDALASTLGSRRSNMLWRASAVVDGSKRQTLSPSKPIRSSEDLGLAFAFTGQGAQYINMGSGLEHYAVYQETLEKISEIYSSFGCSWNLFGNCGENINMPQYSQPLATAVQIALVDLLANFGITPKVVIGHSSGEIAAAYASGGLSLVSACRVSYFRGLLAGKLRKTNASSPGAMLSINLAPHDVLGYLEKTGVLTVSVACINSPLNITLSGPEEAIDKIKSQADQDGIFAQKLKTGVAYHSQSMKVIAGEYLAALEGLTKRKDGTSIPMVSSVTGKSISPETLSTGQYWVDNMLSPVRFAKVVQVIANNNSARKLGLGNITDLIEIGPHPALRRPVKDTLSEMSSASKGVRYSYVLHRSHPAIQTILELAGQLFCEGYPVSILAANQQRTKAKFLVDCPKYPFDRSQRYWAESRLSRDFRLREAVKGELLGVRVSDWNPLEPRWRNFWSIDSSAWTGDHKISDTVLFPASGMLLMAIEAAQEMVPSDRAVFGYNIEKAEFMNPIIVPETWEDRLETQVHLRVVEKQLAAKFDVSIFTYSHNEWVECFTANISVEFQDNDSNGERRVSHEHIQRQHQDVAHTCTLPIDPRVFYRDAAAVGLQYGDWFQLMRNIKWDGKTSAMARVDLSQARFNIRSLVHPAVLDQAFQVLRASSGQQPAANVPVRLKNAWFSSKPWKTPAVLWMSEATPTLHGYGEQGKVTALGEDGEILCCIESVVTSAVSGGITHKEKKLVYSVEWKPQFSMLGSDQLTRLFAANAVPKDDSAVLENHSRLCHTLELVAARVLKNVDKSKVPADLQRHVGWMEHHVSKLPAEHQAEATKISDEELESRLAEVDSVLPAWKLYTTCARKLPDILFGELDPLQVVFESDQADIFYSDLFRNLCADGQLNYLLDLASHENPALRVLEVGAGTGGMTGHVISALQERERRTGGLAFSEYTYTDISPAFFETASKRWPDLKSQGRITFKTLDLDRSIDVQGVDPGSYDLVIAASVLHATPYLEATIRNVRKALKPGGRLILLEVINPDDIATNFMAGLVPGWWVAREEWRPHSAAIPEHLWDKCLKDNGFSGNDLVIRDYQDDQCHIMSVIITTASEPQHKVEEKASRGRLVMLISEDASMKERELADQVRARIDPNLERRATVVTFSLAPVQRELAKLTTDDAVICFVEAGDKPLLSTLSEGQFSCLQFLISKVSNLLWVTSASISDSMCPDNSVAQGFFRSIRAEQPDTHIVTLAIDGEMAQTSQAGFISEVYKTAFETETPSKEVEYVVQDGVITTGRAVRDISTDTALRSLVSKQLQQKSWGEGPALKLGISQPGSLDSLQFVEDQSHAEELGPSDVEIEAMAWGLTSRDLNIALGHPDKRTEEFGSDCVGVVTRIGESCSTTIRIGDRVAIVSAGCMRKYARANEACVFKIPDSLGFENAASLIIPGLSACHSILNVARVQENDNVLIHSAASLLGQIAVRFAQTMSAPVFATVSTAAEKQLLIHILSLNAEHIFDSNSPSLTQDVMRVTEEEGVDVLLDCSRDTLHTPLSCVTDGGCIVSLGGRNSSVASTMAAEIMSRSLTFSSIDIMRLKPKAFSQLAQTTMQLLAEDKIQPPQLLPAFKISDIRNGFKKLQEDTSERVIVIAEQGDTVPQFVQDRRPWTFDGNSTYLVAGGSGGLGRAIIRWMADSGAKHLIIPSRSGAISEAASQLVAELTSHGVNIVAPKCDVSVREDVAVMLEECSHTMPPIKGCINAAMVLQDAIFQSNMTFQQWDLTIRSKVDTSKNLHELLPKDLDFSILLSSLAGVVGQMASANYAGGCAYQDALAKHRRMHGQSALSLDIGWMSNIGIIAEKEAYQRQRQTSNDMQPINDKELLALLTLCCDPNNQLKLPPLSEGQVLFGLRTPADILEEGQQPPALLERPLLSAFSFLAGSNSTPDQAVDHAENARDVFQKSSDARERQQVVIRAIAAKLARAMSISPDDVEPSKPLSSYGVDSLMAVELRNWINKEFSSTVAVFDIIGSVSIAGVAEVVEARSSI.

The 441-residue stretch at 11–451 (MSDIAIVGYS…GSNSHIVLDD (441 aa)) folds into the Ketosynthase family 3 (KS3) domain. Residues cysteine 182, histidine 317, and histidine 357 each act as for beta-ketoacyl synthase activity in the active site. One can recognise a Malonyl-CoA:ACP transacylase (MAT) domain in the interval 589–890 (FAFTGQGAQY…DTLSEMSSAS (302 aa)). The segment at 970–1101 (GELLGVRVSD…ANISVEFQDN (132 aa)) is N-terminal hotdog fold. The region spanning 970–1269 (GELLGVRVSD…TSAVSGGITH (300 aa)) is the PKS/mFAS DH domain. The active-site Proton acceptor; for dehydratase activity is the histidine 1002. The segment at 1126-1269 (TLPIDPRVFY…TSAVSGGITH (144 aa)) is C-terminal hotdog fold. Residue aspartate 1186 is the Proton donor; for dehydratase activity of the active site. The interval 1296–1618 (FAANAVPKDD…FSGNDLVIRD (323 aa)) is methyltransferase (CMet) domain. Positions 1858–2168 (GSLDSLQFVE…QEDTSERVIV (311 aa)) constitute an Enoyl reductase (ER) domain. The Ketoreductase (KR) domain maps to 2192 to 2370 (STYLVAGGSG…ALSLDIGWMS (179 aa)). A Carrier domain is found at 2480–2561 (SDARERQQVV…GVAEVVEARS (82 aa)). At serine 2521 the chain carries O-(pantetheine 4'-phosphoryl)serine.

Pantetheine 4'-phosphate serves as cofactor.

The protein operates within secondary metabolite biosynthesis. Functionally, highly reducing polyketide synthase; part of the gene cluster that mediates the biosynthesis of the tetraketides fugralins such as linear fugralin A and cyclic fugralin B, volatile compounds that play a role in the asexual reproductive cycle but are not involved in pathogenicity. One of the key features of fugralins is the presence of a double methyl group, which is only rarely encountered in fungal secondary metabolites. As the fugralins cluster does not contain an independent methyltransferase, the PKS FGR1 is probably responsible for adding two methyl groups to the same carbon atom. Fugralin B is similar to fugralin A except for a cyclization between the carboxylic acid C-8 and the alcohol on C-4 resulting in a six membered lactone ring, probably catalyzed by the cyclase FGR4. The exact role of the individual cluster genes remains unknown and further work is needed to unravel the biosynthetic pathway. The polypeptide is Highly reducing polyketide synthase 2 (Gibberella zeae (strain ATCC MYA-4620 / CBS 123657 / FGSC 9075 / NRRL 31084 / PH-1) (Wheat head blight fungus)).